A 357-amino-acid polypeptide reads, in one-letter code: NADPH HC-toxin reductase 1 (357 aa).

NADP(+) contacts are provided by residues Arg40, Lys47, 68 to 69 (DL), 88 to 90 (VAT), Tyr178, Lys182, 207 to 210 (LGLV), and Thr222. Lys182 acts as the Proton donor in catalysis.

The protein belongs to the NAD(P)-dependent epimerase/dehydratase family.

Activity is sensitive to heat, dependent on NADPH, and inhibited by p-hydroxymercuribenzoate and disulfiram. In terms of biological role, in tandem with Hm2, NADPH-dependent Helminthosporium carbonum (HC) toxin reductase (HCTR), which inactivates HC toxin, a cyclic tetrapeptide produced by the fungus Cochliobolus carbonum to permit infection and acting as an inhibitor of host histone deacetylases (HDACs), thus conferring resistance against C.carbonum race 1 in resistant cultivars (e.g. cv. B73 and cv. Wisconsin 22). Catalyzes the production of 8-hydroxy derivative of HC-toxin via the reduction of the 8-keto group of 2-amino-9,10-epoxy-8-oxo-decanoic acid, an amino acid of the HC-toxin. This chain is NADPH HC-toxin reductase 1, found in Zea mays (Maize).